Reading from the N-terminus, the 475-residue chain is Cysteine--tRNA ligase (475 aa).

Cys-28 is a binding site for Zn(2+). A 'HIGH' region motif is present at residues 30–40; it reads PTVYDYAHIGN. 3 residues coordinate Zn(2+): Cys-213, His-238, and Glu-242. The 'KMSKS' region motif lies at 270–274; it reads KMSKS. Residue Lys-273 participates in ATP binding.

The protein belongs to the class-I aminoacyl-tRNA synthetase family. Monomer. Requires Zn(2+) as cofactor.

It localises to the cytoplasm. It catalyses the reaction tRNA(Cys) + L-cysteine + ATP = L-cysteinyl-tRNA(Cys) + AMP + diphosphate. The chain is Cysteine--tRNA ligase (cysS) from Chlamydia muridarum (strain MoPn / Nigg).